A 93-amino-acid chain; its full sequence is Aspartyl/glutamyl-tRNA(Asn/Gln) amidotransferase subunit C (93 aa).

It belongs to the GatC family. As to quaternary structure, heterotrimer of A, B and C subunits.

It catalyses the reaction L-glutamyl-tRNA(Gln) + L-glutamine + ATP + H2O = L-glutaminyl-tRNA(Gln) + L-glutamate + ADP + phosphate + H(+). It carries out the reaction L-aspartyl-tRNA(Asn) + L-glutamine + ATP + H2O = L-asparaginyl-tRNA(Asn) + L-glutamate + ADP + phosphate + 2 H(+). Its function is as follows. Allows the formation of correctly charged Asn-tRNA(Asn) or Gln-tRNA(Gln) through the transamidation of misacylated Asp-tRNA(Asn) or Glu-tRNA(Gln) in organisms which lack either or both of asparaginyl-tRNA or glutaminyl-tRNA synthetases. The reaction takes place in the presence of glutamine and ATP through an activated phospho-Asp-tRNA(Asn) or phospho-Glu-tRNA(Gln). This is Aspartyl/glutamyl-tRNA(Asn/Gln) amidotransferase subunit C from Nautilia profundicola (strain ATCC BAA-1463 / DSM 18972 / AmH).